The sequence spans 170 residues: Cathelicidin antimicrobial peptide (170 aa).

Positions 1-30 (MKTQRDGPSLGRWSLVLLLLGLTMPLAITA) are cleaved as a signal peptide. The propeptide at 31–131 (QVLSYQEAVL…DISCDKDERK (101 aa)) is cathelin-like domain (CLD). 2 cysteine pairs are disulfide-bonded: cysteine 86-cysteine 97 and cysteine 108-cysteine 125. The active core stretch occupies residues 150 to 162 (FKKIGQKINDFLG).

It belongs to the cathelicidin family. As to quaternary structure, monomer, homodimer or homotrimer (in vitro). Oligomerizes as tetra- or hexamer in solution (in vitro). In terms of processing, proteolytically cleaved by proteinase PRTN3 into antibacterial peptide LL-37. Proteolytically cleaved by cathepsin CTSG and neutrophil elastase ELANE. Resistant to proteolytic degradation in solution, and when bound to both zwitterionic (mimicking mammalian membranes) and negatively charged membranes (mimicking bacterial membranes). Post-translationally, after secretion onto the skin surface, the CAMP gene product is processed by a serine protease-dependent mechanism into multiple novel antimicrobial peptides distinct from and shorter than cathelicidin LL-37. These peptides show enhanced antimicrobial action, acquiring the ability to kill skin pathogens such as S.aureus, E.coli and C.albicans. These peptides have lost the ability to stimulate CXCL8/IL8 release from keratinocytes. The peptides act synergistically, killing bacteria at lower concentrations when present together, and maintain activity at increased salt condition.

The protein resides in the secreted. It localises to the vesicle. Antimicrobial protein that is an integral component of the innate immune system. Binds to bacterial lipopolysaccharides (LPS). Acts via neutrophil N-formyl peptide receptors to enhance the release of CXCL2. Postsecretory processing generates multiple cathelicidin antimicrobial peptides with various lengths which act as a topical antimicrobial defense in sweat on skin. The unprocessed precursor form, cathelicidin antimicrobial peptide, inhibits the growth of Gram-negative E.coli and E.aerogenes with efficiencies comparable to that of the mature peptide LL-37 (in vitro). In terms of biological role, antimicrobial peptide that is an integral component of the innate immune system. Binds to bacterial lipopolysaccharides (LPS). Causes membrane permeabilization by forming transmembrane pores (in vitro). Causes lysis of E.coli. Exhibits antimicrobial activity against Gram-negative bacteria such as P.aeruginosa, S.typhimurium, E.aerogenes, E.coli and P.syringae, Gram-positive bacteria such as L.monocytogenes, S.epidermidis, S.pyogenes and S.aureus, as well as vancomycin-resistant enterococci (in vitro). Exhibits antimicrobial activity against methicillin-resistant S.aureus, P.mirabilis, and C.albicans in low-salt media, but not in media containing 100 mM NaCl (in vitro). Forms chiral supramolecular assemblies with quinolone signal (PQS) molecules of P.aeruginosa, which may lead to interference of bacterial quorum signaling and perturbance of bacterial biofilm formation. May form supramolecular fiber-like assemblies on bacterial membranes. Induces cytokine and chemokine producation as well as TNF/TNFA and CSF2/GMCSF production in normal human keratinocytes. Exhibits hemolytic activity against red blood cells. Its function is as follows. Exhibits antimicrobial activity against E.coli and B.megaterium (in vitro). This chain is Cathelicidin antimicrobial peptide, found in Cebus capucinus (White-faced sapajou).